A 409-amino-acid chain; its full sequence is MAPRLLLLLLAFLRLGTTGPLVQGRGFRSPTVAWPSFFNFNQPQGVQETIQIPNNGSAPLLVDVQVFVSNVFNVDILRYTVSSMLLLRLSWVDTRLAWNASLYPQHAVTLPWDSLWTPGLTIQEALWVDWQDQSPRARVGPDGHVDLYLALTTETNCDFELLHFPRDQSDCNLSFYALSNTVLELEFRAHAVNEIVSVKREYVVWGLETQIPPRQLVPCFQVTLRLQNTALKAIIALLVPGEALLLADMCGGLLPLRATERIAYKVTLLLGYLVFHSSLVQALPSSSSCNPLLIYYFTVLLLLLFISTMETVLLAALQARGHLSARSSPIPTPRGEQQDHGDLGPHPEEAPGVKESRSWAEAADHIFFLVYVVGVVCSQFFFIGFWMWATCKSDPAPGEAIPHGGQPRL.

The N-terminal stretch at 1–18 (MAPRLLLLLLAFLRLGTT) is a signal peptide. The Extracellular portion of the chain corresponds to 19-233 (GPLVQGRGFR…LRLQNTALKA (215 aa)). 2 N-linked (GlcNAc...) asparagine glycosylation sites follow: Asn-55 and Asn-99. Residues Cys-157 and Cys-171 are joined by a disulfide bond. The helical transmembrane segment at 234–254 (IIALLVPGEALLLADMCGGLL) threads the bilayer. At 255–265 (PLRATERIAYK) the chain is on the cytoplasmic side. Residues 266–286 (VTLLLGYLVFHSSLVQALPSS) form a helical membrane-spanning segment. The Extracellular segment spans residues 287 to 296 (SSCNPLLIYY). A helical membrane pass occupies residues 297–317 (FTVLLLLLFISTMETVLLAAL). Residues 318-365 (QARGHLSARSSPIPTPRGEQQDHGDLGPHPEEAPGVKESRSWAEAADH) are Cytoplasmic-facing. Residues 325-354 (ARSSPIPTPRGEQQDHGDLGPHPEEAPGVK) form a disordered region. Residues 336–354 (EQQDHGDLGPHPEEAPGVK) show a composition bias toward basic and acidic residues. A helical transmembrane segment spans residues 366–386 (IFFLVYVVGVVCSQFFFIGFW). Residues 387–409 (MWATCKSDPAPGEAIPHGGQPRL) lie on the Extracellular side of the membrane.

It belongs to the ligand-gated ion channel (TC 1.A.9) family. In terms of processing, glycosylated.

It is found in the cell membrane. It catalyses the reaction Na(+)(in) = Na(+)(out). It carries out the reaction K(+)(in) = K(+)(out). In terms of biological role, ligand-gated cation channel that allows the movement of sodium and potassium monoatomic cations across cell membranes when activated by zinc (Zn2+), copper (Cu2+), and changes in pH. Could also transport cesium. This Canis lupus familiaris (Dog) protein is Ligand-gated cation channel ZACN.